The following is a 535-amino-acid chain: Inositol 1,4,5-trisphosphate receptor-interacting protein-like 2 (535 aa).

A signal peptide spans 1–32; it reads MSVRYTLNLRVFWPLVTGLCTALVCLYHALRS. The Extracellular portion of the chain corresponds to 33–43; that stretch reads SEDARAESPDG. The helical transmembrane segment at 44-64 threads the bilayer; that stretch reads ADSGFPLLKVAILLLLGYILL. At 65 to 535 the chain is on the cytoplasmic side; it reads RCRHAIRQRL…RIQGSPEDEP (471 aa). The residue at position 139 (S139) is a Phosphoserine.

This sequence belongs to the ITPRIP family.

The protein localises to the membrane. The protein is Inositol 1,4,5-trisphosphate receptor-interacting protein-like 2 (Itpripl2) of Mus musculus (Mouse).